A 62-amino-acid polypeptide reads, in one-letter code: Photosystem II reaction center protein Z (62 aa).

The next 2 membrane-spanning stretches (helical) occupy residues 8–28 (AVFA…VVFA) and 41–61 (FSGT…NSLI).

The protein belongs to the PsbZ family. As to quaternary structure, PSII is composed of 1 copy each of membrane proteins PsbA, PsbB, PsbC, PsbD, PsbE, PsbF, PsbH, PsbI, PsbJ, PsbK, PsbL, PsbM, PsbT, PsbY, PsbZ, Psb30/Ycf12, at least 3 peripheral proteins of the oxygen-evolving complex and a large number of cofactors. It forms dimeric complexes.

It is found in the plastid. Its subcellular location is the chloroplast thylakoid membrane. Functionally, may control the interaction of photosystem II (PSII) cores with the light-harvesting antenna, regulates electron flow through the 2 photosystem reaction centers. PSII is a light-driven water plastoquinone oxidoreductase, using light energy to abstract electrons from H(2)O, generating a proton gradient subsequently used for ATP formation. The chain is Photosystem II reaction center protein Z from Amborella trichopoda.